A 428-amino-acid chain; its full sequence is Glutamate-1-semialdehyde 2,1-aminomutase (428 aa).

Residue Lys265 is modified to N6-(pyridoxal phosphate)lysine.

Belongs to the class-III pyridoxal-phosphate-dependent aminotransferase family. HemL subfamily. Homodimer. The cofactor is pyridoxal 5'-phosphate.

Its subcellular location is the cytoplasm. It carries out the reaction (S)-4-amino-5-oxopentanoate = 5-aminolevulinate. It functions in the pathway porphyrin-containing compound metabolism; protoporphyrin-IX biosynthesis; 5-aminolevulinate from L-glutamyl-tRNA(Glu): step 2/2. The sequence is that of Glutamate-1-semialdehyde 2,1-aminomutase from Thioalkalivibrio sulfidiphilus (strain HL-EbGR7).